Reading from the N-terminus, the 87-residue chain is Small ribosomal subunit protein bS18 (87 aa).

Residues 1-19 are compositionally biased toward basic residues; that stretch reads MSTRSRARKRSRVRSRTRR. Positions 1–25 are disordered; that stretch reads MSTRSRARKRSRVRSRTRRKDPIFV.

Belongs to the bacterial ribosomal protein bS18 family. In terms of assembly, part of the 30S ribosomal subunit. Forms a tight heterodimer with protein bS6.

Binds as a heterodimer with protein bS6 to the central domain of the 16S rRNA, where it helps stabilize the platform of the 30S subunit. This chain is Small ribosomal subunit protein bS18, found in Rhodopirellula baltica (strain DSM 10527 / NCIMB 13988 / SH1).